Reading from the N-terminus, the 533-residue chain is DELLA protein 2 (533 aa).

A compositionally biased stretch (basic and acidic residues) spans 1–12 (MKREHKLEHEDM). The segment at 1–24 (MKREHKLEHEDMSSGSGKSGVCWE) is disordered. The DELLA motif motif lies at 31–35 (DELLA). Positions 157–522 (VETQEKGIRL…RPLIATSAWK (366 aa)) constitute a GRAS domain. The tract at residues 164–218 (IRLVHSLMACAEAVEQNNLKMAEALVKQIGYLAVSQEGAMRKVATYFAEGLARRI) is leucine repeat I (LRI). Residues 166 to 203 (LVHSLMACAEAVEQNNLKMAEALVKQIGYLAVSQEGAM) are required for possible homodimerization. The LxCxE motif; degenerate motif lies at 171–175 (MACAE). Residues 232-297 (QIHFYETCPN…GGPPAFRLTG (66 aa)) form a VHIID region. The VHIID signature appears at 263 to 267 (VHVID). The tract at residues 311 to 343 (QVGWRLAQFAQTIHVQFEYRGFVANSLADLDAS) is leucine repeat II (LRII). Positions 355 to 443 (VAVNSVFELH…EVYLGKQICN (89 aa)) are PFYRE. The LXXLL motif; degenerate signature appears at 363–367 (LHKLN). Residues 446 to 522 (ACEGTDRVER…RPLIATSAWK (77 aa)) form an SAW region.

Belongs to the GRAS family. DELLA subfamily. As to quaternary structure, may be a homodimer. In terms of processing, ubiquitinated. Upon GA application it is ubiquitinated, leading to its subsequent degradation.

The protein localises to the nucleus. Functionally, probable transcriptional regulator that acts as a repressor of the gibberellin (GA) signaling pathway. Probably acts by participating in large multiprotein complexes that repress transcription of GA-inducible genes. Upon GA application, it is degraded by the proteasome, allowing the GA signaling pathway. Together with DELLA1, required to enable arbuscule development during arbuscular mycorrhizal (AM) symbiosis with AM fungi (e.g. Glomus versiforme) via the regulation of RAM1 which, in turn, regulates various AM genes (e.g. NSP1, NSP2, PT4, LEC5, RAM2, EXO70I, STR and RAD1). The polypeptide is DELLA protein 2 (Medicago truncatula (Barrel medic)).